The chain runs to 235 residues: 7-carboxy-7-deazaguanine synthase (235 aa).

Substrate is bound by residues 27–29 (LQG) and R42. In terms of domain architecture, Radical SAM core spans 33–235 (FSGQPSVFVR…VQVHKILKIA (203 aa)). [4Fe-4S] cluster-binding residues include C46, C50, and C53. Residue T55 coordinates Mg(2+). T87 is a substrate binding site. S-adenosyl-L-methionine-binding positions include G89 and 133 to 135 (SPK).

Belongs to the radical SAM superfamily. 7-carboxy-7-deazaguanine synthase family. Homodimer. The cofactor is [4Fe-4S] cluster. S-adenosyl-L-methionine is required as a cofactor. It depends on Mg(2+) as a cofactor.

It carries out the reaction 6-carboxy-5,6,7,8-tetrahydropterin + H(+) = 7-carboxy-7-deazaguanine + NH4(+). The protein operates within purine metabolism; 7-cyano-7-deazaguanine biosynthesis. Functionally, catalyzes the complex heterocyclic radical-mediated conversion of 6-carboxy-5,6,7,8-tetrahydropterin (CPH4) to 7-carboxy-7-deazaguanine (CDG), a step common to the biosynthetic pathways of all 7-deazapurine-containing compounds. In Rhodospirillum rubrum (strain ATCC 11170 / ATH 1.1.1 / DSM 467 / LMG 4362 / NCIMB 8255 / S1), this protein is 7-carboxy-7-deazaguanine synthase.